The primary structure comprises 435 residues: Zinc finger CCCH domain-containing protein 17 (435 aa).

Disordered regions lie at residues 1-30 (MDIETDGRFGNKRVHHRLGPANGAASSSTS) and 58-107 (TAKR…GPRH). The C3H1-type 1 zinc-finger motif lies at 28-54 (STSGKVCIHWRAGRCNRFPCPYLHSEL). The segment covering 77–103 (SGGGGGRGAGGAGGPNKWGRGPGGADG) has biased composition (gly residues). The C3H1-type 2 zinc finger occupies 108–135 (KVPDRPCRYFLAGDCSYGEKCRYPHSYS). 7 WD repeats span residues 148 to 189 (GHEK…GVIN), 191 to 225 (GREIGCMISEGPWLFVGIPDAVKVWNMQTQAEMNL), 227 to 264 (GPTGQVYALAVGNELLFAATQDGRILAWRFSAATNGFE), 271 to 308 (GHQLAVVSLVVGAMRLYSASMDKTIRVWDLATLQCIQT), 311 to 348 (DHTGVVMSVLCWDQFLLSCSLDQTIKVWAATESGSLEV), 355 to 395 (EHGA…DRGR), and 397 to 435 (FSKQEIRAIQVGPSGLFFTGDGTGELKVWQWVIDGSQTK).

This is Zinc finger CCCH domain-containing protein 17 from Oryza sativa subsp. japonica (Rice).